We begin with the raw amino-acid sequence, 313 residues long: Nematocyst expressed protein 8 (313 aa).

An N-terminal signal peptide occupies residues 1 to 19; that stretch reads MLRRPLLLVLFTVFSTLYA. Positions 24–56 are disordered; that stretch reads GVSPPTNESEAEVSPGDDEGPPEPGNEPDVNWR. Over residues 32–44 the composition is skewed to acidic residues; it reads SEAEVSPGDDEGP. ShKT domains lie at 65-99, 109-145, and 151-186; these read CKDK…CRFC, CKDL…CELC, and FKYT…CRKY. 7 cysteine pairs are disulfide-bonded: C65–C99, C72–C92, C81–C96, C109–C145, C127–C142, C160–C179, and C169–C183. The span at 222 to 244 shows a compositional bias: low complexity; that stretch reads TAAPSTQPAETTKAPPNTAAPTA. Residues 222–313 are disordered; that stretch reads TAAPSTQPAE…LCDEKHSSQQ (92 aa). Positions 245–265 are enriched in pro residues; that stretch reads APTPAPTPAPAPAPTPAPVAP. Positions 280–297 are enriched in acidic residues; it reads TPEEQDDNSADESTEIEA.

The protein belongs to the NEP3 family. Nematocytes. In late planulae, is only expressed in a handful of nematocytes in the lower pharynx. Is absent from the tentacles and outer body wall.

It localises to the nematocyst. It is found in the secreted. Functionally, probable toxin probably only used for predation. In Nematostella vectensis (Starlet sea anemone), this protein is Nematocyst expressed protein 8.